The following is a 483-amino-acid chain: MSNNFKDDFEKNRQSIDTNSHQDHTEEVEKDQSELEHQDTIENTEQQFPPRNAQRRKRRRDLATNHNKQVHNESQTSEDNVQNEAGTIDDHQVESSHSTESQEPSHQDSTPQHEEEYYNKNAFAMDKSHPEPIEDNDKHETVKDAENNTEHSTVSDKSEAEQSQQPKPYFATGANQANTSKDKHDDVTVKQYKDESKDHHSGKKGAAIGAGTAGVAGAMAASKAKKHSNDAQNKSNSGKANNSTEDKASQDKSKEHHNGKKGAAIGAGTAGLAGGAASKSASAASKPHASNNASQNHDEHDHHDRDKERKKGGMAKVLLPLIAAVLIIGALAIFGGMALNNHNNGTKENKIANTNKNNADESKDKDTSKDASKDKSKSTDSDKSKEDQDKATKDESDNDQNNANQANNQAQNNQNQQQANQNQQQQQQRQGGGQRHTVNGQENLYRIAIQYYGSGSPENVEKIRRANGLSGNNIRNGQQIVIP.

Over residues 1–40 (MSNNFKDDFEKNRQSIDTNSHQDHTEEVEKDQSELEHQDT) the composition is skewed to basic and acidic residues. The segment at 1-311 (MSNNFKDDFE…HHDRDKERKK (311 aa)) is disordered. Residues 14–34 (QSIDTNSHQDHTEEVEKDQSE) are elastin-binding. A compositionally biased stretch (polar residues) spans 64–85 (TNHNKQVHNESQTSEDNVQNEA). 3 stretches are compositionally biased toward basic and acidic residues: residues 103-118 (EPSH…EEYY), 126-160 (DKSH…KSEA), and 180-199 (SKDK…SKDH). Low complexity predominate over residues 204-222 (KGAAIGAGTAGVAGAMAAS). Residues 230–243 (DAQNKSNSGKANNS) are compositionally biased toward polar residues. Over residues 244 to 256 (TEDKASQDKSKEH) the composition is skewed to basic and acidic residues. Positions 275-294 (GAASKSASAASKPHASNNAS) are enriched in low complexity. Over residues 296 to 311 (NHDEHDHHDRDKERKK) the composition is skewed to basic and acidic residues. Residues 317 to 337 (VLLPLIAAVLIIGALAIFGGM) traverse the membrane as a helical segment. Residues 348–437 (ENKIANTNKN…QRQGGGQRHT (90 aa)) are disordered. Residues 358–395 (NADESKDKDTSKDASKDKSKSTDSDKSKEDQDKATKDE) show a composition bias toward basic and acidic residues. The span at 400 to 428 (QNNANQANNQAQNNQNQQQANQNQQQQQQ) shows a compositional bias: low complexity. One can recognise a LysM domain in the interval 434–482 (QRHTVNGQENLYRIAIQYYGSGSPENVEKIRRANGLSGNNIRNGQQIVI).

The protein localises to the cell membrane. In terms of biological role, promotes binding of soluble elastin peptides and tropoelastin to S.aureus cells although it is not able to promote bacterial adherence to immobilized elastin and, therefore, is not a microbial surface component recognizing adhesive matrix molecule (MSCRAMM). This is Elastin-binding protein EbpS (ebpS) from Staphylococcus aureus (strain bovine RF122 / ET3-1).